Consider the following 224-residue polypeptide: NBPF family member NBPF6-like protein (224 aa).

The 66-residue stretch at 159–224 (ENHHDRKDEE…ASVCDVQDQL (66 aa)) folds into the Olduvai domain. The segment covering 198–209 (YLTHSSHHDSHR) has biased composition (basic and acidic residues). Residues 198 to 224 (YLTHSSHHDSHRPPSSIASVCDVQDQL) are disordered.

The protein belongs to the NBPF family.

The protein is NBPF family member NBPF6-like protein of Bos taurus (Bovine).